Reading from the N-terminus, the 286-residue chain is Leukocyte cell-derived chemotaxin 1 (286 aa).

Residues 29–49 form a helical membrane-spanning segment; the sequence is LVAFIAGAALLLFGGVGAFYL. Residues 75 to 157 form the BRICHOS domain; the sequence is DSAEGTIVEV…FCADLPIYWH (83 aa). Cys-102 and Cys-149 are disulfide-bonded. The propeptide occupies 166–169; it reads RKRR. A compositionally biased stretch (basic residues) spans 166-176; it reads RKRRSATRMRR. The segment at 166-220 is disordered; that stretch reads RKRRSATRMRRQTSAGVNRQPARRRNSTASARDERPTGPEYNPENPYHQNQGSEG. A glycan (N-linked (GlcNAc...) asparagine) is linked at Asn-191. Intrachain disulfides connect Cys-234-Cys-238, Cys-235-Cys-275, Cys-245-Cys-269, and Cys-249-Cys-265.

The protein belongs to the chondromodulin-1 family. Post-translationally, after cleavage, the post-translationally modified ChM-I is secreted as a glycoprotein.

Its subcellular location is the secreted. It localises to the extracellular space. It is found in the extracellular matrix. The protein localises to the endomembrane system. Bifunctional growth regulator. May contribute to the rapid growth of cartilage and vascular invasion prior to the replacement of cartilage by bone during endochondral bone development. Plays a role as antiangiogenic factor in cardiac valves to suppress neovascularization. This is Leukocyte cell-derived chemotaxin 1 from Danio rerio (Zebrafish).